Here is a 387-residue protein sequence, read N- to C-terminus: Succinate--CoA ligase [ADP-forming] subunit beta (387 aa).

The ATP-grasp domain occupies 9–236; sequence KELFAKHNVP…RAATDPLELK (228 aa). ATP contacts are provided by residues Lys-45, 52-54, Ser-94, and Glu-99; that span reads GRG. Mg(2+)-binding residues include Asn-191 and Asp-205. Residues Asn-256 and 318 to 320 each bind substrate; that span reads GIT.

Belongs to the succinate/malate CoA ligase beta subunit family. Heterotetramer of two alpha and two beta subunits. The cofactor is Mg(2+).

The enzyme catalyses succinate + ATP + CoA = succinyl-CoA + ADP + phosphate. The catalysed reaction is GTP + succinate + CoA = succinyl-CoA + GDP + phosphate. It functions in the pathway carbohydrate metabolism; tricarboxylic acid cycle; succinate from succinyl-CoA (ligase route): step 1/1. In terms of biological role, succinyl-CoA synthetase functions in the citric acid cycle (TCA), coupling the hydrolysis of succinyl-CoA to the synthesis of either ATP or GTP and thus represents the only step of substrate-level phosphorylation in the TCA. The beta subunit provides nucleotide specificity of the enzyme and binds the substrate succinate, while the binding sites for coenzyme A and phosphate are found in the alpha subunit. The chain is Succinate--CoA ligase [ADP-forming] subunit beta from Mycobacterium tuberculosis (strain CDC 1551 / Oshkosh).